Reading from the N-terminus, the 148-residue chain is Arginine repressor (148 aa).

This sequence belongs to the ArgR family.

Its subcellular location is the cytoplasm. It functions in the pathway amino-acid biosynthesis; L-arginine biosynthesis [regulation]. Regulates arginine biosynthesis genes. This Chloroherpeton thalassium (strain ATCC 35110 / GB-78) protein is Arginine repressor.